A 770-amino-acid chain; its full sequence is POU domain, class 2, transcription factor 1 (770 aa).

The span at 1–26 shows a compositional bias: polar residues; that stretch reads MNNPSETNKSSMESEDASTGTQTNGL. Disordered stretches follow at residues 1–33, 68–97, 262–285, and 357–385; these read MNNP…KQPV, LNVQ…VQSA, VQTL…EPSD, and LSSD…RRKK. The span at 80–97 shows a compositional bias: low complexity; it reads DSQQSSQPSSQPPSVQSA. Positions 262–272 are enriched in polar residues; sequence VQTLPQSQSTP. 2 positions are modified to phosphothreonine: T271 and T277. The region spanning 281–355 is the POU-specific domain; that stretch reads EEPSDLEELE…LLEKWLNDAE (75 aa). Residue S284 is modified to Phosphoserine. Over residues 357–372 the composition is skewed to low complexity; it reads LSSDSTASSPSALNSP. A DNA-binding region (homeobox) is located at residues 382–441; it reads RRKKRTSIETNIRVALEKSFMENQKPTSEDITLIAEQLNMEKEVIRVWFCNRRQKEKRIN. Residues S388 and S451 each carry the phosphoserine modification. Residues 519–580 are compositionally biased toward low complexity; sequence TTTAGTTDST…TNTTQTTSTP (62 aa). Residues 519-589 are disordered; the sequence is TTTAGTTDST…PLPSPLGASQ (71 aa).

This sequence belongs to the POU transcription factor family. Class-2 subfamily. Interacts with POU2AF1; the interaction increases POU2F1 transactivation activity. Interacts with NR3C1, AR, PGR and HCFC1. Post-translationally, phosphorylated by PRKDC. In terms of tissue distribution, ubiquitously expressed. However, isoforms 4 and 5 are only expressed in lymphocytes.

It localises to the nucleus. Transcription factor that binds to the octamer motif (5'-ATTTGCAT-3') and activates the promoters of the genes for some small nuclear RNAs (snRNA) and of genes such as those for histone H2B and immunoglobulins. Modulates transcription transactivation by NR3C1, AR and PGR. This chain is POU domain, class 2, transcription factor 1 (Pou2f1), found in Mus musculus (Mouse).